A 429-amino-acid polypeptide reads, in one-letter code: O-methyltransferase phnC (429 aa).

Asp285 contributes to the S-adenosyl-L-methionine binding site.

Belongs to the class I-like SAM-binding methyltransferase superfamily. Cation-independent O-methyltransferase family. COMT subfamily.

It catalyses the reaction (2'R)-atrovenetin + S-adenosyl-L-methionine = deoxyherqueinone + S-adenosyl-L-homocysteine + H(+). Its pathway is secondary metabolite biosynthesis. Its function is as follows. O-methyltransferase; part of the gene cluster that mediates the biosynthesis of phenalenones such as herqueinone, compounds that have been reported to treat tumors, bacterial infections and/or mycoses, and rheumatic diseases. The non-reducing polyketide synthase phnA synthesizes the heptaketide backbone and cyclizes it into the angular, hemiketal-containing naphtho-gamma-pyrone prephenalenone. The product template (PT) domain of phnA catalyzes only the C4-C9 aldol condensation, which is unprecedented among known PT domains. The transformation of prephenalenone to phenalenones requires an FAD-dependent monooxygenase phnB, which catalyzes the C2 aromatic hydroxylation of prephenalenone and ring opening of the gamma-pyrone ring simultaneously. Subsequent intramolecular deprotonation of C3 phenolic oxygen accelerates phenalenone ring closure to yield the tricyclic phenalenone core with a C2 hydroxylation. The prenyltransferase phnF further catalyzes reverse C-prenylation of phenalenone by direct electrophilic substitution at C6, or possibly via first a forward O-prenylation of a neighboring phenol in phenalenone, followed by a Claisen rearrangement. The hydroalkoxylation enzyme phnH catalyzes the 5-exo-trig cyclization via acid catalysis after the spontaneous deprotonation of 7-OH, which leads to the formation of the dihydrobenzofuran atrovenetin. Atrovenetin is further converted to deoxyherqueinone by the O-methyltransferase phnC which can methylate C2-OH to stabilize the northern portion of the phenalenone core. Finally, the oxidoreductase phnG converts deoxyherqueinone to herqueinone via C6 hydroxylation. In Penicillium herquei, this protein is O-methyltransferase phnC.